Here is a 244-residue protein sequence, read N- to C-terminus: B3 domain-containing protein At2g36080 (244 aa).

Positions 38-144 form a DNA-binding region, TF-B3; it reads FEKPLTPSDV…RFFIGWRRRG (107 aa).

Its subcellular location is the nucleus. This is B3 domain-containing protein At2g36080 (ARF31) from Arabidopsis thaliana (Mouse-ear cress).